A 245-amino-acid polypeptide reads, in one-letter code: Brasilane terpene glycosides biosynthesis cluster protein D (245 aa).

C3H1-type zinc fingers lie at residues 121–152 (KELK…HDNV) and 161–185 (ICHF…HYPA). The segment at 186–245 (PHRVTAPMPSKKKSKKLRSSVADDASHPDLGKARRHDPRDDEQNDEVWRNQGRARPGQEW) is disordered. Residues 209–226 (DASHPDLGKARRHDPRDD) show a composition bias toward basic and acidic residues.

In terms of biological role, part of the gene cluster that mediates the biosynthesis of the brasilane terpene glycosides brasilane D and E. The biosynthesis starts with the activity of the terpene cyclase braA that converts farnesyl pyrophosphate into the sesquiterpene alcohol trichobrasilenol. Subsequently, trichobrasilenol is glycosylated by the O-glycosyltransferase braB putatively using UDP-GlcNAc as sugar donor to yield brasilane A. The latter then undergoes two rounds of oxidation performed by the cytochrome P450 monooxygenase braC. In the first round braC hydroxylates C-12 forming brasilane D, which serves as substrate in the second round to establish the epoxide at the bond between C-5 and C-10 and oxidize the alcohol at C-12 to an aldehyde leading to the final product brasilane E. The protein is Brasilane terpene glycosides biosynthesis cluster protein D of Annulohypoxylon truncatum (Hypoxylon truncatum).